Here is a 737-residue protein sequence, read N- to C-terminus: FYVE, RhoGEF and PH domain-containing protein 3 (737 aa).

The disordered stretch occupies residues 1-151 (MESGGGSSTP…KADKDAGLAQ (151 aa)). Residues 126 to 136 (ADSDVGEEPDS) are compositionally biased toward acidic residues. Position 128 is a phosphoserine (Ser-128). The DH domain occupies 157 to 341 (KLLHIAQELL…STAANHSNAA (185 aa)). One can recognise a PH 1 domain in the interval 370–469 (ELIKEGQIQK…WIQIIQATIE (100 aa)). Residues 487-533 (QDEDPSLSPDMPITSTSPVEPVVTTEGGSGAAGLEPRKLSSKTRRDK) are disordered. A compositionally biased stretch (low complexity) spans 500-512 (TSTSPVEPVVTTE). Basic and acidic residues predominate over residues 521-533 (EPRKLSSKTRRDK). The FYVE-type zinc finger occupies 532–588 (DKEKQSCKSCGETFNSITKRRHHCKLCGVVICGKCSEFKAENSRQSRVCRECFLTQP). Residues Cys-538, Cys-541, Cys-555, Cys-558, Cys-563, Cys-566, Cys-580, and Cys-583 each coordinate Zn(2+). Disordered regions lie at residues 589–620 (VAPE…SLLC) and 713–737 (AARG…AAAP). Positions 616–715 (PSLLCGPLRL…WLETLSTAAR (100 aa)) constitute a PH 2 domain.

Its subcellular location is the cytoplasm. The protein resides in the cytoskeleton. Promotes the formation of filopodia. May activate CDC42, a member of the Ras-like family of Rho- and Rac proteins, by exchanging bound GDP for free GTP. Plays a role in regulating the actin cytoskeleton and cell shape. In Pongo abelii (Sumatran orangutan), this protein is FYVE, RhoGEF and PH domain-containing protein 3 (FGD3).